The chain runs to 314 residues: Ketimine reductase mu-crystallin (314 aa).

R47 lines the 3,3',5-triiodo-L-thyronine pocket. Residues D82, H92, R119, A144, V146, Q147, N168, R169, T170, N173, T205, L206, V226, and A228 each coordinate NADPH. E257 contacts 3,3',5-triiodo-L-thyronine. An NADPH-binding site is contributed by S292.

The protein belongs to the ornithine cyclodeaminase/mu-crystallin family. As to quaternary structure, homodimer. Binds the thyroid hormone triiodothyronine (T3); T3 binding inhibits enzymatic activity. As to expression, expressed in neural tissues, muscle and kidney. Expressed in the inner ear.

The protein resides in the cytoplasm. The enzyme catalyses L-pipecolate + NADP(+) = Delta(1)-piperideine-2-carboxylate + NADPH + H(+). The catalysed reaction is L-pipecolate + NAD(+) = Delta(1)-piperideine-2-carboxylate + NADH + H(+). It carries out the reaction L-proline + NADP(+) = 1-pyrroline-2-carboxylate + NADPH + H(+). It catalyses the reaction L-proline + NAD(+) = 1-pyrroline-2-carboxylate + NADH + H(+). The enzyme catalyses (3R)-1,4-thiomorpholine-3-carboxylate + NAD(+) = 3,4-dehydrothiomorpholine-3-carboxylate + NADH + 2 H(+). The catalysed reaction is (3R)-1,4-thiomorpholine-3-carboxylate + NADP(+) = 3,4-dehydrothiomorpholine-3-carboxylate + NADPH + 2 H(+). It carries out the reaction (S)-cystathionine ketimine + NADH + 2 H(+) = (3R,5S)-2,3,5,6,7-pentahydro-1,4-thiazepine-3,5-dicarboxylate + NAD(+). It catalyses the reaction (S)-cystathionine ketimine + NADPH + 2 H(+) = (3R,5S)-2,3,5,6,7-pentahydro-1,4-thiazepine-3,5-dicarboxylate + NADP(+). The enzyme catalyses (R)-lanthionine ketimine + NADPH + 2 H(+) = (3R,5R)-1,4-thiomorpholine-3,5-dicarboxylate + NADP(+). The catalysed reaction is Delta(2)-thiazoline-2-carboxylate + NADPH + 2 H(+) = L-thiazolidine-2-carboxylate + NADP(+). Its activity is regulated as follows. Inhibited by thyroid hormones triiodothyronine (T3) and thyroxine (T4). In terms of biological role, catalyzes the NAD(P)H-dependent reduction of imine double bonds of a number of cyclic ketimine substrates, including sulfur-containing cyclic ketimines. Under physiological conditions, it efficiently catalyzes delta(1)-piperideine-2-carboxylate (P2C) and delta(1)-pyrroline-2-carboxylate (Pyr2C) reduction, suggesting a central role in lysine and glutamate metabolism. Additional substrates are delta(2)-thiazoline-2-carboxylate (T2C), 3,4-dehydrothiomorpholine-3-carboxylate (AECK), and (R)-lanthionine ketimine (LK) that is reduced at very low rate compared to other substrates. Also catalyzes the NAD(P)H-dependent reduction of (S)-cystathionine ketimine (CysK). The protein is Ketimine reductase mu-crystallin of Homo sapiens (Human).